A 49-amino-acid chain; its full sequence is Large ribosomal subunit protein bL33B (49 aa).

This sequence belongs to the bacterial ribosomal protein bL33 family.

The chain is Large ribosomal subunit protein bL33B from Lactobacillus delbrueckii subsp. bulgaricus (strain ATCC BAA-365 / Lb-18).